The following is a 459-amino-acid chain: MTVDDSLSPAGVATPHSSGIRVVVVGLGIAGLTTAIECHRKGHTVIALEKSPVIRVLGDSLGLGSNATNVLEKWADGKILQQLKSLADDISIFEALDSAGKLYAKDDAKGFGADNGMIINRGSLATTLHEYAKMLEIDIRFGAAVTGHWEDESAAGVIINGEQRLVADCVIGCDGIHSKTREAVLTKEPTAVPSGQAVFRASFDSTSVCNDPNARWILAEKGVRDRLSQYMAEGGLALSLATGKRGQNITWQLWHEDNHNANELWSEHNSAKLENALGMIRHWPIYSKVVPILRHTPKEALTDFKLVNRAALPTWISHAGRIIIIGDAAHPVLPIVGQGGGQGIEDAATVAICLQLAGKTHISLALQAVERLRYARTSIIQSSGPKIYAGVRNPDWKAIEKDPSLIMLPRPKWIFGYDVPRDVYEQFPLVKRAIEEGSSYTPKNIPPGGRYEFLHDFKE.

Positions 49, 62, and 121 each coordinate FAD. Catalysis depends on residues Arg-200 and Tyr-230. Residues Asp-327 and Gly-340 each coordinate FAD.

It belongs to the paxM FAD-dependent monooxygenase family. FAD is required as a cofactor.

It functions in the pathway secondary metabolite biosynthesis. In terms of biological role, FAD-dependent monooxygenase; part of the gene cluster that mediates the biosynthesis of the benzazepine alkaloid nanangelenin A which contains an unprecedented 3,4-dihydro-1-benzazepine-2,5-dione-N-prenyl-N-acetoxy-anthranilamide scaffold. The first step of nanangelenin biosynthesis is catalyzed by the indoleamine 2,3-dioxygenase nanC which produces N-formyl-kynurenine through the catabolism of tryptophan. The two-module NRPS nanA then utilizes anthranilate (Ant) and L-kynurenine (L-Kyn) to assemble the dipeptide product nanangelenin B. The first adenylation domain of nanA (A1) loads anthranilate onto the T1 domain, while A2 loads kynurenine, generated through spontaneous nonenzymatic deformylation of the nanC-supplied N-formyl-kynurenine. The peptide bond formation between the tethered amino acids is catalyzed by the first condensation domain (C1) between anthranilate's carbonyl carbon and kynurenine's aliphatic primary amine. The second C domain (C2) catalyzes the final cyclization event between the aromatic amine of kynurenine and the tethered carbonyl carbon, yielding nanangelenin B. The terminal T3 domain enhances the catalytic efficiency of C2, suggesting the T2-tethered Ant-L-Kyn is transferred to T3 prior to cyclization by C2. Once released from nanA, nanangelenin B is then prenylated by the prenyltransferase nanD to form nanangelenin C. Nanangelenin C is then N-hydroxylated by the FAD-dependent monooxygenase nanF and further acetylated by the acetyltransferase nanB to yield nanangelenin F. Finally, the N-methyltransferase nanE methylates the amide nitrogen of 1-benzazepine to convert nanangelenin F into nanangelenin A. NanE is also able to methylate most of the intermediates of the pathway such as nanangelenin B and nanangelenin C to produce nanangelenin D and nanangelenin E, respectively. This chain is FAD-dependent monooxygenase nanF, found in Aspergillus nanangensis.